Consider the following 209-residue polypeptide: GTP cyclohydrolase-2 (209 aa).

Residue arginine 49 to glutamate 53 coordinates GTP. Residues cysteine 54, cysteine 65, and cysteine 67 each contribute to the Zn(2+) site. GTP-binding positions include glutamine 70, glutamate 92–arginine 94, and threonine 114. Aspartate 126 serves as the catalytic Proton acceptor. The Nucleophile role is filled by arginine 128. GTP is bound by residues threonine 149 and lysine 154.

The protein belongs to the GTP cyclohydrolase II family. Requires Zn(2+) as cofactor.

It catalyses the reaction GTP + 4 H2O = 2,5-diamino-6-hydroxy-4-(5-phosphoribosylamino)-pyrimidine + formate + 2 phosphate + 3 H(+). The protein operates within cofactor biosynthesis; riboflavin biosynthesis; 5-amino-6-(D-ribitylamino)uracil from GTP: step 1/4. In terms of biological role, catalyzes the conversion of GTP to 2,5-diamino-6-ribosylamino-4(3H)-pyrimidinone 5'-phosphate (DARP), formate and pyrophosphate. The chain is GTP cyclohydrolase-2 from Shewanella halifaxensis (strain HAW-EB4).